Here is a 462-residue protein sequence, read N- to C-terminus: Anthranilate synthase component 1 (462 aa).

L-tryptophan is bound by residues serine 46 and proline 243 to methionine 245. Glycine 278–threonine 279 is a binding site for chorismate. A Mg(2+)-binding site is contributed by glutamate 305. Chorismate contacts are provided by residues tyrosine 394, arginine 414, serine 428–glycine 430, and glycine 430. Glutamate 444 lines the Mg(2+) pocket.

This sequence belongs to the anthranilate synthase component I family. In terms of assembly, heterotetramer consisting of two non-identical subunits: a beta subunit (TrpG) and a large alpha subunit (TrpE). The cofactor is Mg(2+).

The catalysed reaction is chorismate + L-glutamine = anthranilate + pyruvate + L-glutamate + H(+). The protein operates within amino-acid biosynthesis; L-tryptophan biosynthesis; L-tryptophan from chorismate: step 1/5. Its activity is regulated as follows. Feedback inhibited by tryptophan. Its function is as follows. Part of a heterotetrameric complex that catalyzes the two-step biosynthesis of anthranilate, an intermediate in the biosynthesis of L-tryptophan. In the first step, the glutamine-binding beta subunit (TrpG) of anthranilate synthase (AS) provides the glutamine amidotransferase activity which generates ammonia as a substrate that, along with chorismate, is used in the second step, catalyzed by the large alpha subunit of AS (TrpE) to produce anthranilate. In the absence of TrpG, TrpE can synthesize anthranilate directly from chorismate and high concentrations of ammonia. The protein is Anthranilate synthase component 1 (trpE) of Leptospira biflexa.